We begin with the raw amino-acid sequence, 237 residues long: 2,3-bisphosphoglycerate-dependent phosphoglycerate mutase (237 aa).

Residues 8–15, 21–22, R60, 87–90, K98, 114–115, and 180–181 contribute to the substrate site; these read RHGQSQWN, TG, ERHY, RR, and GN. The active-site Tele-phosphohistidine intermediate is the H9. E87 (proton donor/acceptor) is an active-site residue.

The protein belongs to the phosphoglycerate mutase family. BPG-dependent PGAM subfamily. As to quaternary structure, homodimer.

It catalyses the reaction (2R)-2-phosphoglycerate = (2R)-3-phosphoglycerate. It participates in carbohydrate degradation; glycolysis; pyruvate from D-glyceraldehyde 3-phosphate: step 3/5. Catalyzes the interconversion of 2-phosphoglycerate and 3-phosphoglycerate. The protein is 2,3-bisphosphoglycerate-dependent phosphoglycerate mutase of Caulobacter vibrioides (strain ATCC 19089 / CIP 103742 / CB 15) (Caulobacter crescentus).